The chain runs to 2149 residues: Non-reducing polyketide synthase PvBS090_009107 (2149 aa).

An N-terminal acylcarrier protein transacylase domain (SAT) region spans residues 8–244; that stretch reads YLFGDQTGEF…VRVPVHAPYH (237 aa). Positions 375-806 constitute a Ketosynthase family 3 (KS3) domain; that stretch reads QSKIAIIGLS…GGNTALLIED (432 aa). Residues C547, H682, and H724 each act as for beta-ketoacyl synthase activity in the active site. Residues 911–1231 are malonyl-CoA:ACP transacylase (MAT) domain; sequence FVFTGQGAQY…LSAIYLAGVD (321 aa). S1000 acts as the For acyl/malonyl transferase activity in catalysis. A product template (PT) domain region spans residues 1290 to 1604; it reads TTSVQRIVET…RQVLNTVLPP (315 aa). Residues 1294–1426 are N-terminal hotdog fold; that stretch reads QRIVETRDEG…CLVKFSDTHL (133 aa). One can recognise a PKS/mFAS DH domain in the interval 1294–1599; sequence QRIVETRDEG…FQGVPRQVLN (306 aa). The active-site Proton acceptor; for dehydratase activity is the H1326. Residues 1454-1599 are C-terminal hotdog fold; it reads SHRMHRGMFY…FQGVPRQVLN (146 aa). The Proton donor; for dehydratase activity role is filled by D1512. The interval 1604 to 1631 is disordered; that stretch reads PAGGSKAAPRTTARAVPPPPINVEKPKS. One can recognise a Carrier 1 domain in the interval 1649 to 1726; it reads SAGPSVLVQA…DLKQLLSQAS (78 aa). O-(pantetheine 4'-phosphoryl)serine is present on S1686. 2 stretches are compositionally biased toward low complexity: residues 1722–1731 and 1744–1755; these read LSQASPSDSS and SSSTEPSTPGTP. The interval 1722–1763 is disordered; it reads LSQASPSDSSDSSEESHYSFRDSSSTEPSTPGTPAFFSPKRG. Residues 1769 to 1846 enclose the Carrier 2 domain; that stretch reads VGESETIKTI…AVETALDLKP (78 aa). O-(pantetheine 4'-phosphoryl)serine is present on S1806. The segment at 1875 to 2147 is thioesterase (TE) domain; sequence STHPPATSIL…KLSAFIGRAM (273 aa). The For thioesterase activity role is filled by S1965.

The catalysed reaction is 6 malonyl-CoA + acetyl-CoA + 6 H(+) = naphtopyrone YWA1 + 6 CO2 + 7 CoA + H2O. It participates in secondary metabolite biosynthesis. Its pathway is pigment biosynthesis. In terms of biological role, non-reducing polyketide synthase; part of the gene cluster 24 that mediates the biosynthesis of a pigment with an aromatic structure protecting the pigmented fungus from both ionizing and non-ionizing radiations based on a mechanism similar to melanin, that is, free radical quenching and spherical spatial arrangement. Catalyzes the biosynthesis of the gamma-naphthopyrone precursor YWA1, via condensation of one acetyl-CoA starter unit with 6 malonyl-CoA units. YWA1 is probably further processed by the additional enzymes present within the cluster 24, however these additional steps have not been characterized yet. YWA1 is not converted to DHN-melanin in Byssochlamys spectabilis since the use of the DHN-melanin pathway inhibitor pyroquilon does not result in a loss of pigmentation. This is Non-reducing polyketide synthase PvBS090_009107 from Byssochlamys spectabilis (Paecilomyces variotii).